A 419-amino-acid polypeptide reads, in one-letter code: Enolase (419 aa).

Gln161 provides a ligand contact to (2R)-2-phosphoglycerate. Glu205 functions as the Proton donor in the catalytic mechanism. The Mg(2+) site is built by Asp240, Glu283, and Asp309. Residues Lys334, Arg363, Ser364, and Lys385 each coordinate (2R)-2-phosphoglycerate. Catalysis depends on Lys334, which acts as the Proton acceptor.

It belongs to the enolase family. The cofactor is Mg(2+).

It localises to the cytoplasm. The protein resides in the secreted. The protein localises to the cell surface. It catalyses the reaction (2R)-2-phosphoglycerate = phosphoenolpyruvate + H2O. It participates in carbohydrate degradation; glycolysis; pyruvate from D-glyceraldehyde 3-phosphate: step 4/5. Functionally, catalyzes the reversible conversion of 2-phosphoglycerate (2-PG) into phosphoenolpyruvate (PEP). It is essential for the degradation of carbohydrates via glycolysis. The polypeptide is Enolase (Saccharolobus islandicus (strain M.16.27) (Sulfolobus islandicus)).